We begin with the raw amino-acid sequence, 1023 residues long: Exportin-T (1023 aa).

Belongs to the exportin family.

It localises to the nucleus. Its subcellular location is the cytoplasm. Functionally, tRNA nucleus export receptor which facilitates tRNA translocation across the nuclear pore complex. Involved in pre-tRNA splicing, probably by affecting the interaction of pre-tRNA with splicing endonuclease. In Botryotinia fuckeliana (strain B05.10) (Noble rot fungus), this protein is Exportin-T (los1).